The following is a 227-amino-acid chain: Esterase OVCA2 (227 aa).

Residues Ser-120, Asp-180, and His-207 each act as charge relay system in the active site.

The protein belongs to the LovG family.

The catalysed reaction is a carboxylic ester + H2O = an alcohol + a carboxylate + H(+). Exhibits ester hydrolase activity with a strong preference for long-chain alkyl ester substrates and high selectivity against a variety of short, branched, and substituted esters. Is able to hydrolyze ester bonds within a wide range of p-nitrophenyl derivatives (C2-C14) in vitro, with a strong preference toward substrates of &gt;8 carbons. In Danio rerio (Zebrafish), this protein is Esterase OVCA2 (ovca2).